The sequence spans 1123 residues: Polyprotein of EF-Ts, chloroplastic (1123 aa).

The N-terminal 73 residues, 1 to 73 (MTPVVHCSVG…SSARRPRTLS (73 aa)), are a transit peptide targeting the chloroplast. The tract at residues 68–141 (RPRTLSAATV…MPPLNDEDLV (74 aa)) is disordered. The span at 94-103 (TSEESSEDTA) shows a compositional bias: acidic residues. Positions 106-119 (TAEASEQAEASTSS) are enriched in low complexity. The S1 motif 1 domain maps to 143-212 (GASFTGKVRS…ETGRISLTMR (70 aa)). Residues 213–258 (TGGDYVKPKTETPKAASGGRNTTATTSRGSPRQTRERDEAKSMGET) form a disordered region. Polar residues predominate over residues 231–244 (GRNTTATTSRGSPR). The span at 245–254 (QTRERDEAKS) shows a compositional bias: basic and acidic residues. The region spanning 263–331 (GQFLDGVVKN…VRGQVTLTMK (69 aa)) is the S1 motif 2 domain. Disordered stretches follow at residues 443-670 (KTES…SEKT) and 894-923 (VAAQTAAKAPPAAPPKDDKPEETAETEEKK). The segment covering 486–501 (EGSVTTEPTEAASTEF) has biased composition (polar residues). Low complexity predominate over residues 551–587 (SVASTESVTAVVEESAPVSSVAIEVPAPEASEASAQE). The span at 630–639 (KPDEPEESLI) shows a compositional bias: acidic residues. Composition is skewed to low complexity over residues 657–670 (AAVPEEVAASSEKT) and 894–903 (VAAQTAAKAP). The span at 908–923 (PKDDKPEETAETEEKK) shows a compositional bias: basic and acidic residues.

It belongs to the EF-Ts family. As to quaternary structure, component of the chloroplast ribosome 30S and 70S subunits, as well as polysomes. In terms of assembly, component of the chloroplast ribosome 70S subunit, and at low levels, present in polysomes. Associates transiently with chloroplast polysomes.

The protein localises to the plastid. It localises to the chloroplast. Functionally, associates with the EF-Tu.GDP complex and induces the exchange of GDP to GTP. It remains bound to the aminoacyl-tRNA.EF-Tu.GTP complex up to the GTP hydrolysis stage on the ribosome. Binds to psbD and psbA 5'-untranslated regions (UTRs) in vitro. The polypeptide is Polyprotein of EF-Ts, chloroplastic (Oryza sativa subsp. indica (Rice)).